A 287-amino-acid chain; its full sequence is GTPase Era (287 aa).

The 164-residue stretch at 11–174 (RSGFVAVIGR…RSYLASSLPE (164 aa)) folds into the Era-type G domain. GTP is bound by residues 19-26 (GRTNVGKS) and 66-70 (DTPGI). The 69-residue stretch at 205–273 (LRDELPQALA…PLTLRVKVQR (69 aa)) folds into the KH type-2 domain.

The protein belongs to the TRAFAC class TrmE-Era-EngA-EngB-Septin-like GTPase superfamily. Era GTPase family. In terms of assembly, monomer.

It is found in the cytoplasm. Its subcellular location is the cell membrane. Its function is as follows. An essential GTPase that binds both GDP and GTP, with rapid nucleotide exchange. Plays a role in 16S rRNA processing and 30S ribosomal subunit biogenesis and possibly also in cell cycle regulation and energy metabolism. In Acidimicrobium ferrooxidans (strain DSM 10331 / JCM 15462 / NBRC 103882 / ICP), this protein is GTPase Era.